Here is a 105-residue protein sequence, read N- to C-terminus: Small ribosomal subunit protein uS10c (105 aa).

It belongs to the universal ribosomal protein uS10 family. As to quaternary structure, part of the 30S ribosomal subunit.

It localises to the plastid. The protein resides in the chloroplast. In terms of biological role, involved in the binding of tRNA to the ribosomes. This chain is Small ribosomal subunit protein uS10c, found in Pyropia yezoensis (Susabi-nori).